The sequence spans 1029 residues: Collagen, type I, alpha 1b (1029 aa).

Positions 1 to 990 are disordered; sequence QMSYVDHSKS…KAPDPFRGGH (990 aa). Positions 13–33 are enriched in pro residues; that stretch reads PPQPGPMGPMGPRGPPGPPGS. A compositionally biased stretch (low complexity) spans 34 to 57; sequence SGPQGFTGPPGEPGEPGASGAMGS. The span at 67–81 shows a compositional bias: basic and acidic residues; sequence NGDDGEPGKPGRPGE. Low complexity-rich tracts occupy residues 82 to 91, 120 to 129, and 136 to 147; these read RGAAGPQGAR, VPGVMGARGR, and SGARGNDGNTGP. A compositionally biased stretch (gly residues) spans 163-182; it reads PGGAGAKGETGPAGGRGNEG. Composition is skewed to low complexity over residues 199–223, 233–267, and 299–309; these read AGPAGSPGTDGAPGAKGSPGAAGLA, AQGAVGAPGPKGNNGDPGASGPKGEPGAKGEPGPA, and ERGAPGARGFP. Residues 310 to 322 are compositionally biased toward gly residues; sequence GADGGAGGKGAPG. Low complexity-rich tracts occupy residues 323–351 and 429–465; these read ERGAPGALGAQGATGESGSPGAPGAPGSK and VGAPGPSGVAGPAGEKGEQGPAGPPGFQGLPGPQGAT. Gly residues predominate over residues 466-477; sequence GETGKGLGGPTG. The segment covering 478–497 has biased composition (low complexity); it reads PRGAPGPAGNDGAKGEPGAA. Composition is skewed to gly residues over residues 498 to 507 and 531 to 540; these read GAPGGLGAPG and GGKGGDGAPG. 2 stretches are compositionally biased toward low complexity: residues 571-580 and 593-620; these read VAGPTGPRGA and AGFAGPPGADGQPGAKGETGDSGPKGDA. Composition is skewed to gly residues over residues 621–630 and 645–654; these read GAPGPGGPVG and GARGGAGPPG. 5 stretches are compositionally biased toward low complexity: residues 655–665, 694–722, 731–743, 830–839, and 855–869; these read ATGFPGPAGRV, ETGAAGRPGEAGAAGAPGPSGEKGSPGXD, PQGLAGQRGLPGQ, APGAVGPSGK, and SGPAGVRGPAGPAGA. Positions 870-884 are enriched in basic and acidic residues; that stretch reads KGDRGEAGEAGDRGG. Low complexity predominate over residues 906-934; it reads PAGASGPAGPRGPAGSNGAPGKDGMNGLP. Residues 952–967 show a composition bias toward pro residues; the sequence is AGPPGPPGPAGPPGPP. The Fibrillar collagen NC1 domain maps to 999–1029; sequence TQKLPLLDLAPMDVGAPDQEFGVEVGPVCFL.

This sequence belongs to the fibrillar collagen family.

The protein localises to the secreted. It localises to the extracellular space. It is found in the extracellular matrix. The chain is Collagen, type I, alpha 1b from Epinephelus aeneus (White grouper).